Here is a 497-residue protein sequence, read N- to C-terminus: Beta-glucosidase 8 (497 aa).

A signal peptide spans methionine 1–alanine 22. Glutamine 42 contacts a beta-D-glucoside. Asparagine 65 is a glycosylation site (N-linked (GlcNAc...) asparagine). Residues histidine 139 and asparagine 184 to glutamate 185 each bind a beta-D-glucoside. The active-site Proton donor is the glutamate 185. The N-linked (GlcNAc...) asparagine glycan is linked to asparagine 202. Tyrosine 319 contacts a beta-D-glucoside. Asparagine 354 carries an N-linked (GlcNAc...) asparagine glycan. A beta-D-glucoside is bound by residues glutamate 387, tryptophan 430, and phenylalanine 446. Glutamate 387 serves as the catalytic Nucleophile. Residues asparagine 452, asparagine 474, and asparagine 490 are each glycosylated (N-linked (GlcNAc...) asparagine).

The protein belongs to the glycosyl hydrolase 1 family.

The catalysed reaction is Hydrolysis of terminal, non-reducing beta-D-glucosyl residues with release of beta-D-glucose.. This is Beta-glucosidase 8 from Arabidopsis thaliana (Mouse-ear cress).